A 384-amino-acid polypeptide reads, in one-letter code: Glucans biosynthesis protein C (384 aa).

Helical transmembrane passes span 17 to 37 (AWLM…THSW), 54 to 74 (FIHA…SYML), 91 to 111 (VGIP…ILLQ), 140 to 160 (LWFL…FTWF), 173 to 193 (AISL…YAAI), 212 to 232 (FIVM…LAFI), 240 to 260 (FTTP…AYLL), 274 to 294 (TESV…FSLG), 311 to 331 (ASLF…AYIT), and 338 to 358 (LIGF…LYEI).

This sequence belongs to the acyltransferase 3 family. OpgC subfamily.

The protein resides in the cell membrane. The protein operates within glycan metabolism; osmoregulated periplasmic glucan (OPG) biosynthesis. In terms of biological role, necessary for the succinyl substitution of periplasmic glucans. Could catalyze the transfer of succinyl residues from the cytoplasmic side of the membrane to the nascent glucan backbones on the periplasmic side of the membrane. The sequence is that of Glucans biosynthesis protein C from Salmonella schwarzengrund (strain CVM19633).